The sequence spans 103 residues: MYAIIETGGKQLCVREGDTVRVEKLAVEDGAEVVFDRVLLVSTEEGLKIGRPLVLGARVTGRVQKQGRARKIIVFKYKAKKNYRRKQGHRQPYTQVVIEKIEL.

The protein belongs to the bacterial ribosomal protein bL21 family. In terms of assembly, part of the 50S ribosomal subunit. Contacts protein L20.

This protein binds to 23S rRNA in the presence of protein L20. The polypeptide is Large ribosomal subunit protein bL21 (Desulforudis audaxviator (strain MP104C)).